The sequence spans 78 residues: Omega-conotoxin-like Ac6.5 (78 aa).

An N-terminal signal peptide occupies residues 1 to 22 (MKLTCVVIVAVLLLTACQLLTA). Residues 23–42 (DDSRGTQKHRSLRSTTKVSK) constitute a propeptide that is removed on maturation. 3 cysteine pairs are disulfide-bonded: Cys46/Cys62, Cys53/Cys65, and Cys61/Cys72. 4-hydroxyproline is present on residues Pro55 and Pro67.

The protein belongs to the conotoxin O1 superfamily. Expressed by the venom duct.

It is found in the secreted. Its function is as follows. Omega-conotoxins act at presynaptic membranes, they bind and block voltage-gated calcium channels (Cav). This chain is Omega-conotoxin-like Ac6.5, found in Conus achatinus (Little frog cone).